The primary structure comprises 187 residues: UPF0232 protein JTY_0004 (187 aa).

2 stretches are compositionally biased toward basic and acidic residues: residues 1–17 and 24–45; these read MTGS…ERSM and LVRR…DAGR. Disordered stretches follow at residues 1–75 and 168–187; these read MTGS…DPQP and PSWR…DTYG.

This sequence belongs to the UPF0232 family.

The chain is UPF0232 protein JTY_0004 from Mycobacterium bovis (strain BCG / Tokyo 172 / ATCC 35737 / TMC 1019).